We begin with the raw amino-acid sequence, 951 residues long: Leucine-rich repeat-containing G-protein coupled receptor 4 (951 aa).

A signal peptide spans Met-1–Ala-24. One can recognise an LRRNT domain in the interval Ala-25–Ala-57. Topologically, residues Ala-25–Thr-544 are extracellular. 2 disulfide bridges follow: Cys-29-Cys-35 and Cys-33-Cys-43. LRR repeat units follow at residues Phe-58–Asn-79, Phe-82–Gly-103, Glu-106–Gly-127, Ala-130–Gly-151, Gln-154–Pro-177, Thr-178–Asn-199, Ser-202–Gly-223, Asn-226–Leu-247, Ser-249–Gly-270, and Leu-273–Asn-294. N-linked (GlcNAc...) asparagine glycosylation occurs at Asn-68. Asn-199 carries N-linked (GlcNAc...) asparagine glycosylation. N-linked (GlcNAc...) asparagine glycans are attached at residues Asn-294 and Asn-314. LRR repeat units follow at residues His-320 to Glu-341, Met-344 to His-365, Ala-366 to Gly-387, Ser-390 to Thr-411, and Pro-414 to Gly-435. Cysteines 339 and 364 form a disulfide. 2 disulfide bridges follow: Cys-470/Cys-522 and Cys-471/Cys-476. An N-linked (GlcNAc...) asparagine glycan is attached at Asn-505. The chain crosses the membrane as a helical span at residues Val-545–Ala-565. The Cytoplasmic segment spans residues Ser-566 to Leu-575. A helical transmembrane segment spans residues Phe-576 to Phe-596. Topologically, residues Leu-597–Val-620 are extracellular. Residues Cys-618 and Cys-693 are joined by a disulfide bond. Residues Ala-621–Val-641 form a helical membrane-spanning segment. Over Glu-642–Gln-661 the chain is Cytoplasmic. The helical transmembrane segment at Phe-662–Phe-682 threads the bilayer. Residues His-683–Ser-703 lie on the Extracellular side of the membrane. A helical membrane pass occupies residues Leu-704–Ile-724. At Tyr-725–Asn-756 the chain is on the cytoplasmic side. A helical membrane pass occupies residues Cys-757–Ile-777. At Ser-778–Lys-783 the chain is on the extracellular side. The helical transmembrane segment at Ser-784–Phe-804 threads the bilayer. At Asn-805–Asp-951 the chain is on the cytoplasmic side. Residue Ser-920 is modified to Phosphoserine.

This sequence belongs to the G-protein coupled receptor 1 family. In terms of tissue distribution, expressed in multiple steroidogenic tissues: placenta, ovary, testis and adrenal. Expressed also in spinal cord, thyroid, stomach, trachea, heart, pancreas, kidney, prostate and spleen.

The protein resides in the cell membrane. Functionally, receptor for R-spondins that potentiates the canonical Wnt signaling pathway and is involved in the formation of various organs. Upon binding to R-spondins (RSPO1, RSPO2, RSPO3 or RSPO4), associates with phosphorylated LRP6 and frizzled receptors that are activated by extracellular Wnt receptors, triggering the canonical Wnt signaling pathway to increase expression of target genes. In contrast to classical G-protein coupled receptors, does not activate heterotrimeric G-proteins to transduce the signal. Its function as activator of the Wnt signaling pathway is required for the development of various organs, including liver, kidney, intestine, bone, reproductive tract and eye. May also act as a receptor for norrin (NDP), such results however require additional confirmation in vivo. Required during spermatogenesis to activate the Wnt signaling pathway in peritubular myoid cells. Required for the maintenance of intestinal stem cells and Paneth cell differentiation in postnatal intestinal crypts. Acts as a regulator of bone formation and remodeling. Involved in kidney development; required for maintaining the ureteric bud in an undifferentiated state. Involved in the development of the anterior segment of the eye. Required during erythropoiesis. Also acts as a negative regulator of innate immunity by inhibiting TLR2/TLR4 associated pattern-recognition and pro-inflammatory cytokine production. Plays an important role in regulating the circadian rhythms of plasma lipids, partially through regulating the rhythmic expression of MTTP. Required for proper development of GnRH neurons (gonadotropin-releasing hormone expressing neurons) that control the release of reproductive hormones from the pituitary gland. The polypeptide is Leucine-rich repeat-containing G-protein coupled receptor 4 (LGR4) (Homo sapiens (Human)).